The primary structure comprises 1640 residues: Clathrin heavy chain 2 (1640 aa).

Ala2 is subject to N-acetylalanine. Residues Ala2–Tyr479 are globular terminal domain. WD40-like repeat regions lie at residues Asn24–Ser67, Ala68–Glu107, Val108–Val149, Gly150–Glu195, Gly196–Gln257, Asn258–Asp301, and Thr302–Glu330. Phosphoserine is present on Ser67. Tyr184 is subject to Phosphotyrosine. Phosphothreonine is present on Thr394. Residues Glu449–Asp465 are binding site for the uncoating ATPase, involved in lattice disassembly. Positions Leu480 to Lys523 are flexible linker. The tract at residues Ile524 to Tyr634 is distal segment. A heavy chain arm region spans residues Ile524–Glu1640. CHCR repeat units lie at residues Val537–Val683, Ala686–Val828, Ile833–Asp972, Leu979–Ala1124, Tyr1128–Ala1269, Leu1274–Asn1420, and Leu1423–Phe1566. Residue Tyr634 is modified to Phosphotyrosine. The proximal segment stretch occupies residues Ala639–Glu1640. Lys737 carries the N6-succinyllysine modification. Position 856 is an N6-acetyllysine (Lys856). Residue Tyr899 is modified to Phosphotyrosine. Ser1167 bears the Phosphoserine mark. Position 1206 is a phosphotyrosine (Tyr1206). The involved in binding clathrin light chain stretch occupies residues Ala1213 to Ala1522. The residue at position 1229 (Ser1229) is a Phosphoserine. Lys1441 is modified (N6-acetyllysine; alternate). The residue at position 1441 (Lys1441) is an N6-succinyllysine; alternate. 2 positions are modified to phosphotyrosine: Tyr1477 and Tyr1487. Ser1494 is subject to Phosphoserine. An N6-acetyllysine modification is found at Lys1501. The tract at residues Gln1551–Glu1640 is trimerization.

This sequence belongs to the clathrin heavy chain family. Clathrin triskelions, composed of 3 heavy chains and 3 light chains, are the basic subunits of the clathrin coat. In the presence of light chains, hub assembly is influenced by both the pH and the concentration of calcium. May interact with OCRL. Interacts with AFTPH/aftiphilin. In terms of tissue distribution, maximal levels in skeletal muscle. High levels in heart and testis. Low expression detected in all other tissues.

The protein localises to the cytoplasmic vesicle membrane. Its subcellular location is the membrane. The protein resides in the coated pit. Clathrin is the major protein of the polyhedral coat of coated pits and vesicles. Two different adapter protein complexes link the clathrin lattice either to the plasma membrane or to the trans-Golgi network. This chain is Clathrin heavy chain 2 (CLTCL1), found in Homo sapiens (Human).